Reading from the N-terminus, the 245-residue chain is NAD(P)H-hydrate epimerase (245 aa).

In terms of domain architecture, YjeF N-terminal spans 21–221 (MREIDRLAVQ…DLGIPPAVYT (201 aa)). 72-76 (GNGGG) is a (6S)-NADPHX binding site. K(+) is bound by residues Asn-73 and Asp-135. (6S)-NADPHX is bound by residues 139-145 (GYSLLGA) and Asp-168. K(+) is bound at residue Ser-171.

The protein belongs to the NnrE/AIBP family. K(+) is required as a cofactor.

It carries out the reaction (6R)-NADHX = (6S)-NADHX. It catalyses the reaction (6R)-NADPHX = (6S)-NADPHX. In terms of biological role, catalyzes the epimerization of the S- and R-forms of NAD(P)HX, a damaged form of NAD(P)H that is a result of enzymatic or heat-dependent hydration. This is a prerequisite for the S-specific NAD(P)H-hydrate dehydratase to allow the repair of both epimers of NAD(P)HX. The polypeptide is NAD(P)H-hydrate epimerase (Dehalogenimonas lykanthroporepellens (strain ATCC BAA-1523 / JCM 15061 / BL-DC-9)).